Reading from the N-terminus, the 222-residue chain is Pyridoxal phosphate homeostasis protein (222 aa).

Lysine 35 is subject to N6-(pyridoxal phosphate)lysine.

The protein belongs to the pyridoxal phosphate-binding protein YggS/PROSC family.

In terms of biological role, pyridoxal 5'-phosphate (PLP)-binding protein, which is involved in PLP homeostasis. This chain is Pyridoxal phosphate homeostasis protein, found in Helicobacter pylori (strain J99 / ATCC 700824) (Campylobacter pylori J99).